We begin with the raw amino-acid sequence, 876 residues long: DNA double-strand break repair Rad50 ATPase (876 aa).

ATP is bound by residues Arg-11, 31–37, and Gln-139; that span reads NGAGKTT. Coiled-coil stretches lie at residues 188-528 and 575-710; these read RERV…EDRL and SGVE…RKER. One can recognise a Zinc-hook domain in the interval 387 to 484; it reads EETLQSEYEE…RLESVRRELE (98 aa). Positions 432 and 435 each coordinate Zn(2+).

Belongs to the SMC family. RAD50 subfamily. In terms of assembly, homodimer. Forms a heterotetramer composed of two Mre11 subunits and two Rad50 subunits. The cofactor is Zn(2+).

Part of the Rad50/Mre11 complex, which is involved in the early steps of DNA double-strand break (DSB) repair. The complex may facilitate opening of the processed DNA ends to aid in the recruitment of HerA and NurA. Rad50 controls the balance between DNA end bridging and DNA resection via ATP-dependent structural rearrangements of the Rad50/Mre11 complex. This chain is DNA double-strand break repair Rad50 ATPase, found in Methanopyrus kandleri (strain AV19 / DSM 6324 / JCM 9639 / NBRC 100938).